The sequence spans 418 residues: Gamma-glutamyl phosphate reductase (418 aa).

It belongs to the gamma-glutamyl phosphate reductase family.

It localises to the cytoplasm. The catalysed reaction is L-glutamate 5-semialdehyde + phosphate + NADP(+) = L-glutamyl 5-phosphate + NADPH + H(+). It functions in the pathway amino-acid biosynthesis; L-proline biosynthesis; L-glutamate 5-semialdehyde from L-glutamate: step 2/2. Its function is as follows. Catalyzes the NADPH-dependent reduction of L-glutamate 5-phosphate into L-glutamate 5-semialdehyde and phosphate. The product spontaneously undergoes cyclization to form 1-pyrroline-5-carboxylate. The sequence is that of Gamma-glutamyl phosphate reductase from Desulfotalea psychrophila (strain LSv54 / DSM 12343).